Here is a 425-residue protein sequence, read N- to C-terminus: Tumor necrosis factor receptor superfamily member 16 (425 aa).

The first 29 residues, 1 to 29, serve as a signal peptide directing secretion; sequence MRRAGAACSAMDRLRLLLLLILGVSSGGA. Residues 30–253 are Extracellular-facing; sequence KETCSTGLYT…VTRGTTDNLI (224 aa). TNFR-Cys repeat units lie at residues 32–65, 67–108, 109–147, and 149–189; these read TCSTGLYTHSGECCKACNLGEGVAQPCGANQTVC, PCLD…DAVC, RCAYGYYQDEETGHCEACSVCEVGSGLVFSCQDKQNTVC, and ECPE…DAEC. 12 cysteine pairs are disulfide-bonded: Cys33-Cys44, Cys45-Cys58, Cys48-Cys65, Cys68-Cys84, Cys87-Cys100, Cys90-Cys108, Cys110-Cys123, Cys126-Cys139, Cys129-Cys147, Cys150-Cys165, Cys168-Cys181, and Cys171-Cys189. N-linked (GlcNAc...) asparagine glycans are attached at residues Asn61 and Asn71. Residues 193–225 form a disordered region; that stretch reads PGRWIPRSTPPEGSDSTAPSTQEPEVPPEQDLV. The segment covering 206–215 has biased composition (polar residues); sequence SDSTAPSTQE. Residues 254-274 traverse the membrane as a helical segment; it reads PVYCSILAAVVVGLVAYIAFK. The Cytoplasmic segment spans residues 275–425; it reads RWNSCKQNKQ…CSESTATSPV (151 aa). Composition is skewed to polar residues over residues 282 to 292 and 306 to 327; these read NKQGANSRPVN and SGISVDSQSLHDQQTHTQTASG. The disordered stretch occupies residues 282–332; the sequence is NKQGANSRPVNQTPPPEGEKLHSDSGISVDSQSLHDQQTHTQTASGQALKG. Residue Ser312 is modified to Phosphoserine. Residues 327 to 342 form a mediates interaction with KIDINS220 region; that stretch reads GQALKGDGNLYSSLPL. One can recognise a Death domain in the interval 354–419; it reads GDTWRHLAGE…DIVESLCSES (66 aa).

Homodimer; disulfide-linked. Heterodimer with SORCS2. The extracellular domains of the heterodimer bind NGF. The cytoplasmic region of the heterodimer binds TRIO. NGF binding mediates dissociation of TRIO from the receptor complex. Interacts with RTN4R. Interacts with TRAF2, TRAF4 and TRAF6. Interacts with PTPN13 and RANBP9. Interacts through TRAF6 with SQSTM1 which bridges NGFR to NTRK1. Interacts with BEX1. Interacts with BEX3. Interacts with KIDINS220 and NTRK1. Can form a ternary complex with NTRK1 and KIDINS220 and this complex is affected by the expression levels of KIDINS220. An increase in KIDINS220 expression leads to a decreased association of NGFR and NTRK1. Interacts (via death domain) with RAB31. Interacts with NTRK2; may regulate the ligand specificity of the NTRK2 receptor. Interacts with LINGO1. Interacts with NRADD. Interacts with MAGED1; the interaction antagonizes the association NGFR:NTRK1. Interacts (via death domain) with ARHGDIA and RIPK2. Interacts with BFAR. In terms of processing, subject to intramembrane proteolytic cleavage by the gamma-secretase complex, giving rise to an intracellular fragment that is rapidly degraded via the proteasome. Post-translationally, N- and O-glycosylated. Phosphorylated on serine residues.

The protein localises to the cell membrane. The protein resides in the cytoplasm. It localises to the perikaryon. Its subcellular location is the cell projection. It is found in the growth cone. The protein localises to the dendritic spine. In terms of biological role, low affinity receptor which can bind to NGF, BDNF, NTF3, and NTF4. Forms a heterodimeric receptor with SORCS2 that binds the precursor forms of NGF, BDNF and NTF3 with high affinity, and has much lower affinity for mature NGF and BDNF. In response to proNGF binding, the heterodimeric receptor with SORCS2 activates a signaling cascade that leads to decreased Rac activity, reorganization of the actin cytoskeleton and neuronal growth cone collapse. Plays an important role in differentiation and survival of specific neuronal populations during development. Can mediate cell survival as well as cell death of neural cells. Plays a role in the inactivation of RHOA. Plays a role in the regulation of the translocation of GLUT4 to the cell surface in adipocytes and skeletal muscle cells in response to insulin, probably by regulating RAB31 activity, and thereby contributes to the regulation of insulin-dependent glucose uptake. Necessary for the circadian oscillation of the clock genes BMAL1, PER1, PER2 and NR1D1 in the suprachiasmatic nucleus (SCN) of the brain and in liver and of the genes involved in glucose and lipid metabolism in the liver. This Rattus norvegicus (Rat) protein is Tumor necrosis factor receptor superfamily member 16 (Ngfr).